Reading from the N-terminus, the 229-residue chain is Synaptogyrin-3 (229 aa).

M1 is subject to N-acetylmethionine. An MARVEL domain is found at 20–172; sequence FARRPQTLLR…LTVKALQRFR (153 aa). 4 helical membrane-spanning segments follow: residues 30–50, 70–90, 105–125, and 148–168; these read VVSWVFSIAVFGPIVNEGYVN, FGVVLGLGAFIACVAFLLLDV, VLLDLGFSGVWSFLWFVGFCF, and AAIAFSFFSILSWVALTVKAL. The span at 209 to 223 shows a compositional bias: polar residues; that stretch reads QSPPFTETLDTSSKG. The tract at residues 209 to 229 is disordered; sequence QSPPFTETLDTSSKGYQVPAY.

The protein belongs to the synaptogyrin family. As to quaternary structure, interacts (via N-terminus) with SLC6A3 (via N-terminus). May interact with VMAT2. In terms of tissue distribution, specifically expressed in brain. Found in the brain across the dorsal and ventral corpus striatum as well as in the cortex.

The protein localises to the cytoplasmic vesicle. It is found in the secretory vesicle. Its subcellular location is the synaptic vesicle membrane. The protein resides in the synapse. Its function is as follows. May play a role in regulated exocytosis. May indirectly regulate the activity of the plasma membrane dopamine transporter SLC6A3 and thereby regulate dopamine transport back from the synaptic cleft into the presynaptic terminal. The sequence is that of Synaptogyrin-3 from Mus musculus (Mouse).